Here is a 727-residue protein sequence, read N- to C-terminus: Sodium-dependent neutral amino acid transporter SLC6A17 (727 aa).

Over 1-68 the chain is Cytoplasmic; it reads MPKNSKVTQR…DRPAWNSKLQ (68 aa). Phosphoserine is present on residues Ser13 and Ser20. A helical membrane pass occupies residues 69–89; sequence YILAQIGFSVGLGNIWRFPYL. Topologically, residues 90–96 are extracellular; that stretch reads CQKNGGG. The helical transmembrane segment at 97–116 threads the bilayer; it reads AYLVPYLVLLIIIGIPLFFL. Residues 117–140 lie on the Cytoplasmic side of the membrane; sequence ELAVGQRIRRGSIGVWHYVCPRLG. Residues 141–161 form a helical membrane-spanning segment; that stretch reads GIGFSSCIVCLFVGLYYNVII. The Extracellular segment spans residues 162–224; it reads GWSVFYFFKS…NSISESGGLN (63 aa). Asn186 carries N-linked (GlcNAc...) asparagine glycosylation. Residues 225-243 traverse the membrane as a helical segment; the sequence is WKMTLCLLVAWSIVGMAVV. Topologically, residues 244–251 are cytoplasmic; that stretch reads KGIQSSGK. Residues 252–269 form a helical membrane-spanning segment; sequence VMYFSSLFPYVVLACFLV. The Extracellular portion of the chain corresponds to 270-304; it reads RGLLLRGAVDGILHMFTPKLDKMLDPQVWREAATQ. Residues 305–322 form a helical membrane-spanning segment; that stretch reads VFFALGLGFGGVIAFSSY. The Cytoplasmic portion of the chain corresponds to 323 to 333; that stretch reads NKQDNNCHFDA. The chain crosses the membrane as a helical span at residues 334 to 355; the sequence is ALVSFINFFTSVLATLVVFAVL. The Extracellular segment spans residues 356–451; that stretch reads GFKANIMNEK…FIAFTEAMTH (96 aa). The residue at position 377 (Tyr377) is a Phosphotyrosine. An N-linked (GlcNAc...) asparagine glycan is attached at Asn393. The chain crosses the membrane as a helical span at residues 452–471; the sequence is FPASPFWSVMFFLMLINLGL. At 472-494 the chain is on the cytoplasmic side; that stretch reads GSMIGTMAGITTPIIDTFKVPKE. A helical transmembrane segment spans residues 495–513; it reads MFTVGCCVFAFFVGLLFVQ. Residues 514 to 528 are Extracellular-facing; sequence RSGNYFVTMFDDYSA. A helical membrane pass occupies residues 529-549; the sequence is TLPLTVIVILENIAVAWIYGT. At 550-569 the chain is on the cytoplasmic side; sequence KKFMQELTEMLGFQPYRFYF. The helical transmembrane segment at 570 to 591 threads the bilayer; the sequence is YMWKFVSPLCMAVLTTASIIQL. Over 592–618 the chain is Extracellular; that stretch reads GVSPPGYSAWIKEEAAERYLYFPNWAM. A helical transmembrane segment spans residues 619 to 641; sequence ALLITLIAVATLPIPVVFILRHF. The Cytoplasmic segment spans residues 642 to 727; it reads HLLSDGSNTL…LLASTPESEL (86 aa). Phosphoserine is present on residues Ser665 and Ser701. Positions 680-727 are disordered; that stretch reads VPSEAPSPMPTHRSYLGPGSTSPLDNSNNPNGRYGSGYLLASTPESEL. Positions 698–710 are enriched in polar residues; that stretch reads GSTSPLDNSNNPN.

The protein belongs to the sodium:neurotransmitter symporter (SNF) (TC 2.A.22) family. Expressed in the brain. The strongest expression levels in embryonic, postnatal, and adult stages are found in both cortical and hippocampal tissues.

The protein localises to the cytoplasmic vesicle. Its subcellular location is the secretory vesicle. The protein resides in the synaptic vesicle membrane. It is found in the postsynapse. It localises to the presynapse. It catalyses the reaction L-proline(in) + Na(+)(in) = L-proline(out) + Na(+)(out). It carries out the reaction L-leucine(in) + Na(+)(in) = L-leucine(out) + Na(+)(out). The catalysed reaction is glycine(in) + Na(+)(in) = glycine(out) + Na(+)(out). The enzyme catalyses L-alanine(in) + Na(+)(in) = L-alanine(out) + Na(+)(out). It catalyses the reaction L-glutamine(in) + Na(+)(in) = L-glutamine(out) + Na(+)(out). In terms of biological role, synaptic vesicle transporter with apparent selectivity for neutral amino acids. The transport is sodium-coupled but chloride-independent, likely driven by the proton electrochemical gradient generated by vacuolar H(+)-ATPase in an overall electrogenic mechanism. May contribute to the synaptic uptake of neurotransmitter precursors in a process coupled in part to vesicle exocytosis. The polypeptide is Sodium-dependent neutral amino acid transporter SLC6A17 (Mus musculus (Mouse)).